Here is a 1083-residue protein sequence, read N- to C-terminus: Solute carrier family 12 member 7 (1083 aa).

The tract at residues 1–51 (MPTNFTVVPVEARADGAGDEAAERTEEPGSPESADPACPTPGDGNPRENSP) is disordered. Over 1–119 (MPTNFTVVPV…RREIKAPRMG (119 aa)) the chain is Cytoplasmic. Residues 12 to 27 (ARADGAGDEAAERTEE) are compositionally biased toward basic and acidic residues. Residues S30, S33, S50, and S62 each carry the phosphoserine modification. The chain crosses the membrane as a discontinuously helical span at residues 120 to 142 (TFIGVYLPCLQNILGVILFLRLT). K(+) contacts are provided by N131 and I132. Chloride is bound at residue V135. Topologically, residues 143 to 149 (WIVGAAG) are extracellular. The chain crosses the membrane as a helical span at residues 150–172 (VLESFLIVAMCCTCTMLTAISMS). Over 173–196 (AIATNGVVPAGGSYYMISRSLGPE) the chain is Cytoplasmic. A helical transmembrane segment spans residues 197 to 225 (FGGAVGLCFYLGTTFAGAMYILGTIEIFL). Topologically, residues 226–249 (TYISPSAAIFQAETADGEAAALLN) are extracellular. Helical transmembrane passes span 250-271 (NMRV…VGVK) and 272-300 (YVNK…KTAF). At 301–419 (APPDIPVCLL…PYVLTDIMTY (119 aa)) the chain is on the extracellular side. Residues N312, N331, and N360 are each glycosylated (N-linked (GlcNAc...) asparagine). A helical membrane pass occupies residues 420–440 (FTMLVGIYFPSVTGIMAGSNR). Residues P429 and T432 each coordinate K(+). P429 is a chloride binding site. 2 residues coordinate chloride: G433 and I434. Over 441–450 (SGDLKDAQKS) the chain is Cytoplasmic. The chain crosses the membrane as a helical span at residues 451 to 473 (IPTGTILAIVTTSFIYLSCIVLF). Topologically, residues 474–504 (GACIEGVVLRDKFGEALQGNLVIGMLAWPSP) are extracellular. Residues 505–531 (WVIVIGSFFSTCGAGLQSLTGAPRLLQ) form a helical membrane-spanning segment. The Cytoplasmic segment spans residues 532–554 (AIARDGIIPFLQVFGHGKANGEP). The next 2 membrane-spanning stretches (helical) occupy residues 555–573 (TWAL…LIAS) and 574–598 (LDSV…ACAV). Y589 contributes to the chloride binding site. Residues 599–612 (QTLLRTPNWRPRFK) are Cytoplasmic-facing. The next 2 membrane-spanning stretches (helical) occupy residues 613 to 635 (FYHW…ICSW) and 636 to 651 (YYAL…IYKY). Residues 652–1083 (IEYRGAEKEW…GGREVITIYS (432 aa)) are Cytoplasmic-facing. The segment at 664–680 (GIRGLSLNAARYALLRV) is scissor helix. 2 positions are modified to phosphothreonine: T973 and T980.

It belongs to the SLC12A transporter family. K/Cl co-transporter subfamily. As to quaternary structure, homodimer; adopts a domain-swap conformation at the scissor helices connecting the transmembrane domain and C-terminal domain. Heterodimer with K-Cl cotransporter SLC12A5. Widely expressed with highest levels in kidney, liver and pancreas. Expressed in choroid plexus and suprachiasmatic nucleus.

The protein resides in the cell membrane. The enzyme catalyses K(+)(in) + chloride(in) = K(+)(out) + chloride(out). With respect to regulation, activated by N-ethylmaleimide (NEM). Inhibited by furosemide, DIDS and bumetanide. The inhibition is much stronger in the presence of 50 mM K(+) in the uptake medium. Inhibited by DIOA. Inhibited by WNK3. Its function is as follows. Mediates electroneutral potassium-chloride cotransport when activated by cell swelling. May mediate K(+) uptake into Deiters' cells in the cochlea and contribute to K(+) recycling in the inner ear. Important for the survival of cochlear outer and inner hair cells and the maintenance of the organ of Corti. May be required for basolateral Cl(-) extrusion in the kidney and contribute to renal acidification. The polypeptide is Solute carrier family 12 member 7 (Rattus norvegicus (Rat)).